An 88-amino-acid chain; its full sequence is Kunitz-type U15-theraphotoxin-Hhn1c (88 aa).

Positions M1–A27 are cleaved as a signal peptide. Positions E28–R33 are excised as a propeptide. The BPTI/Kunitz inhibitor domain maps to C37–C85. 2 cysteine pairs are disulfide-bonded: C37–C85 and C60–C81.

Belongs to the venom Kunitz-type family. 03 (sub-Kunitz) subfamily. As to expression, expressed by the venom gland.

It is found in the secreted. In terms of biological role, serine protease inhibitor that inhibits trypsin at a molar ratio of 1:1. The sequence is that of Kunitz-type U15-theraphotoxin-Hhn1c from Cyriopagopus hainanus (Chinese bird spider).